Reading from the N-terminus, the 101-residue chain is Putative monooxygenase Rv0793 (101 aa).

Positions valine 5–leucine 93 constitute an ABM domain.

Homodimer.

Putative monooygenase that might be involved in antibiotic biosynthesis, or may act as reactive oxygen species scavenger that could help in evading host defenses. The polypeptide is Putative monooxygenase Rv0793 (Mycobacterium tuberculosis (strain ATCC 25618 / H37Rv)).